The primary structure comprises 145 residues: 3-hydroxyacyl-[acyl-carrier-protein] dehydratase FabZ (145 aa).

H47 is a catalytic residue.

It belongs to the thioester dehydratase family. FabZ subfamily.

It localises to the cytoplasm. It carries out the reaction a (3R)-hydroxyacyl-[ACP] = a (2E)-enoyl-[ACP] + H2O. Its function is as follows. Involved in unsaturated fatty acids biosynthesis. Catalyzes the dehydration of short chain beta-hydroxyacyl-ACPs and long chain saturated and unsaturated beta-hydroxyacyl-ACPs. This Thiobacillus denitrificans (strain ATCC 25259 / T1) protein is 3-hydroxyacyl-[acyl-carrier-protein] dehydratase FabZ.